Here is a 471-residue protein sequence, read N- to C-terminus: A-type ATP synthase subunit B (471 aa).

Belongs to the ATPase alpha/beta chains family. In terms of assembly, has multiple subunits with at least A(3), B(3), C, D, E, F, H, I and proteolipid K(x).

It is found in the cell membrane. In terms of biological role, component of the A-type ATP synthase that produces ATP from ADP in the presence of a proton gradient across the membrane. The B chain is a regulatory subunit. This chain is A-type ATP synthase subunit B, found in Halobacterium salinarum (strain ATCC 29341 / DSM 671 / R1).